We begin with the raw amino-acid sequence, 291 residues long: Beta-lactamase CTX-M-8 (291 aa).

An N-terminal signal peptide occupies residues 1 to 30 (MMRHRVKRMMLMTTACISLLLGSAPLYAQA). The Nucleophile; acyl-ester intermediate role is filled by serine 73. A beta-lactam-binding residues include lysine 76, serine 133, glutamate 169, and serine 240.

It belongs to the class-A beta-lactamase family. Monomer.

The protein localises to the secreted. The enzyme catalyses a beta-lactam + H2O = a substituted beta-amino acid. Its activity is regulated as follows. Inhibited by the beta-lactamase-blocking agents clavulanic acid, tazobactam and sulbactam; in the DH5alpha strain of E.coli. Its function is as follows. Extended-spectrum beta-lactamase (ESBL) which confers resistance to penicillins, as well as first, third and fourth-generation cephalosporins. Has cefotaxime-hydrolyzing activity. Inactive against cephalosporin antibiotic, cefoxitin, and the carbapenem, imipenem. In Citrobacter amalonaticus, this protein is Beta-lactamase CTX-M-8.